The chain runs to 347 residues: Dolichyl-diphosphooligosaccharide--protein glycosyltransferase subunit TUSC3 (347 aa).

Residues 1 to 41 form the signal peptide; it reads MGARGAPSRRRQAGRRPRYLPTGSFPFLLLLLLLCIQLGGG. Residues 42 to 196 are Lumenal-facing; that stretch reads QKKKENLLAE…DVHIRVFRPP (155 aa). In terms of domain architecture, Thioredoxin spans 59-187; that stretch reads WSSRRSVFRM…LAKWIADRTD (129 aa). A glycan (N-linked (GlcNAc...) asparagine) is linked at N83. C99 and C102 form a disulfide bridge. A helical membrane pass occupies residues 197 to 217; the sequence is NYSGTIALALLVSLVGGLLYL. Residues 218–221 are Cytoplasmic-facing; the sequence is RRNN. A helical transmembrane segment spans residues 222-242; the sequence is LEFIYNKTGWAMVSLCIVFAM. At 243 to 276 the chain is on the lumenal side; the sequence is TSGQMWNHIRGPPYAHKNPHNGQVSYIHGSSQVQ. Residues 277 to 297 form a helical membrane-spanning segment; sequence FVAESHIILVLNAAITMGMDL. Over 298-312 the chain is Cytoplasmic; the sequence is LNEAATSKGDVGKRR. The helical transmembrane segment at 313–333 threads the bilayer; the sequence is IICLVGLGLVVFFFSFLLSIF. At 334 to 347 the chain is on the lumenal side; it reads RSKYHGYPYSFLIK.

It belongs to the OST3/OST6 family. Accessory component of the STT3B-containing form of the oligosaccharyltransferase (OST) complex. OST exists in two different complex forms which contain common core subunits RPN1, RPN2, OST48, OST4, DAD1 and TMEM258, either STT3A or STT3B as catalytic subunits, and form-specific accessory subunits. OST can form stable complexes with the Sec61 complex or with both the Sec61 and TRAP complexes. The association of TUSC3 or MAGT1 with the STT3B-containing complex seems to be mutually exclusvice.

Its subcellular location is the endoplasmic reticulum membrane. The protein operates within protein modification; protein glycosylation. In terms of biological role, acts as accessory component of the N-oligosaccharyl transferase (OST) complex which catalyzes the transfer of a high mannose oligosaccharide from a lipid-linked oligosaccharide donor to an asparagine residue within an Asn-X-Ser/Thr consensus motif in nascent polypeptide chains. Involved in N-glycosylation of STT3B-dependent substrates. Specifically required for the glycosylation of a subset of acceptor sites that are near cysteine residues; in this function seems to act redundantly with MAGT1. In its oxidized form proposed to form transient mixed disulfides with a glycoprotein substrate to facilitate access of STT3B to the unmodified acceptor site. Also has oxidoreductase-independent functions in the STT3B-containing OST complex possibly involving substrate recognition. Could indirectly play a role in Mg(2+) transport. This Bos taurus (Bovine) protein is Dolichyl-diphosphooligosaccharide--protein glycosyltransferase subunit TUSC3 (TUSC3).